A 65-amino-acid chain; its full sequence is Potassium channel toxin kappa-KTx 2.7 (65 aa).

Residues Met1–Cys26 form the signal peptide. Positions Ser27–Glu39 are excised as a propeptide. 2 disulfide bridges follow: Cys45–Cys63 and Cys49–Cys59.

It belongs to the short scorpion toxin superfamily. Potassium channel inhibitor kappa-KTx family. Kappa-KTx 2 subfamily. In terms of tissue distribution, expressed by the venom gland.

The protein resides in the secreted. Weakly inhibits the Kv7.1/KCNQ1 channel (10 uM of the toxin inhibits currents by 17.8%). The polypeptide is Potassium channel toxin kappa-KTx 2.7 (Heterometrus petersii (Asian forest scorpion)).